Consider the following 475-residue polypeptide: FAD-dependent monooxygenase janM (475 aa).

A helical membrane pass occupies residues 8 to 24; it reads VIIVGGSIGGLTLAHCL. FAD-binding residues include Glu-35, Gly-49, and Arg-108. Residue Asn-147 is glycosylated (N-linked (GlcNAc...) asparagine). Residues Asp-299 and Ala-312 each coordinate FAD. The helical transmembrane segment at 432–451 threads the bilayer; that stretch reads GWRFHAMLCILMLAILYTWV.

The protein belongs to the paxM FAD-dependent monooxygenase family. The cofactor is FAD.

It is found in the membrane. Its pathway is secondary metabolite biosynthesis. Its function is as follows. FAD-dependent monooxygenase; part of the gene cluster that mediates the biosynthesis of the indole diterpenes janthitremanes such as shearinine K or shearinine A. The geranylgeranyl diphosphate (GGPP) synthase janG catalyzes the first step in janthitremane biosynthesis via conversion of farnesyl pyrophosphate and isopentyl pyrophosphate into geranylgeranyl pyrophosphate (GGPP). Condensation of indole-3-glycerol phosphate with GGPP by the prenyl transferase janC then forms 3-geranylgeranylindole (3-GGI). Epoxidation by the FAD-dependent monooxygenase janM leads to a epoxidized-GGI that is substrate of the terpene cyclase janB for cyclization to yield paspaline. Paspaline is subsequently converted to 13-desoxypaspaline by the cytochrome P450 monooxygenase janP, via beta-PC-M6 in a series of alpha-face oxidations. The cytochrome P450 monooxygenase janQ is proposed to carry out sequential beta-face oxidation steps at C-7 and C-13 of 13-desoxypaspaline to form paspalicine and paspalinine respectively. The indole diterpene prenyltransferase janD may then convert paspalinine into shearinine K which is substrate of janO and/or additional enzymes for oxidation and cyclization to generate shearinine A. The protein is FAD-dependent monooxygenase janM of Penicillium janthinellum (Penicillium vitale).